The primary structure comprises 424 residues: Acetyl-CoA acetyltransferase, mitochondrial (424 aa).

A mitochondrion-targeting transit peptide spans 1–30; the sequence is MAALAVLHGVVRRPLLRGLLQEVRCLGRSY. K63 is modified (N6-acetyllysine; alternate). The residue at position 63 (K63) is an N6-succinyllysine; alternate. At K75 the chain carries N6-succinyllysine. C123 acts as the Acyl-thioester intermediate in catalysis. Residues K171, K178, K187, and K199 each carry the N6-acetyllysine; alternate modification. Residues K171, K178, K187, and K199 each carry the N6-succinyllysine; alternate modification. A Phosphoserine modification is found at S204. Y216 serves as a coordination point for CoA. A K(+)-binding site is contributed by Y216. N6-acetyllysine; alternate is present on residues K220 and K227. K220 and K227 each carry N6-succinyllysine; alternate. At K240 the chain carries N6-succinyllysine. K242 carries the N6-acetyllysine; alternate modification. K242 is modified (N6-succinyllysine; alternate). An N6-acetyllysine mark is found at K248 and K254. Residues 255 to 257 and K260 contribute to the CoA site; that span reads RVD. Residue K260 is modified to N6-acetyllysine; alternate. At K260 the chain carries N6-succinyllysine; alternate. 2 positions are modified to N6-succinyllysine: K263 and K265. Residue K270 is modified to N6-acetyllysine. A277, A278, and A280 together coordinate K(+). Residue S281 coordinates CoA. Residue K335 is modified to N6-acetyllysine. V378 is a binding site for K(+). The active-site Proton donor/acceptor is C410.

It belongs to the thiolase-like superfamily. Thiolase family. Homotetramer. Post-translationally, succinylation at Lys-265, adjacent to a coenzyme A binding site. Desuccinylated by SIRT5.

The protein resides in the mitochondrion. It catalyses the reaction 2 acetyl-CoA = acetoacetyl-CoA + CoA. It carries out the reaction propanoyl-CoA + acetyl-CoA = 2-methyl-3-oxobutanoyl-CoA + CoA. It functions in the pathway lipid metabolism; fatty acid beta-oxidation. Activated by potassium ions, but not sodium ions. Its function is as follows. This is one of the enzymes that catalyzes the last step of the mitochondrial beta-oxidation pathway, an aerobic process breaking down fatty acids into acetyl-CoA. Using free coenzyme A/CoA, catalyzes the thiolytic cleavage of medium- to long-chain 3-oxoacyl-CoAs into acetyl-CoA and a fatty acyl-CoA shortened by two carbon atoms. The activity of the enzyme is reversible and it can also catalyze the condensation of two acetyl-CoA molecules into acetoacetyl-CoA. Thereby, it plays a major role in ketone body metabolism. In Rattus norvegicus (Rat), this protein is Acetyl-CoA acetyltransferase, mitochondrial (Acat1).